Consider the following 548-residue polypeptide: Thermostable neutral protease NprT (548 aa).

The first 25 residues, 1–25 (MNKRAMLGAIGLAFGLLAAPIGASA), serve as a signal peptide directing secretion. The propeptide at 26 to 229 (KGESIVWNEQ…DSRQPGGGQP (204 aa)) is activation peptide. Ca(2+) is bound by residues Asp-289, Asp-291, Gln-293, and Asp-370. His-374 contacts Zn(2+). Glu-375 is an active-site residue. Zn(2+) contacts are provided by His-378 and Glu-398. Glu-409, Asn-415, Asp-417, Glu-419, Glu-422, Tyr-425, Thr-426, Val-429, and Asp-432 together coordinate Ca(2+). His-463 acts as the Proton donor in catalysis.

This sequence belongs to the peptidase M4 family. It depends on Ca(2+) as a cofactor. Zn(2+) is required as a cofactor.

It localises to the secreted. Its casein hydrolytic activity is inhibited almost completely by a chelating agent (EDTA), whereas neither diisopropyl fluorophosphate nor phenylmethylsulfonyl fluoride inhibit the proteolytic activity in vitro. Extracellular zinc metalloprotease. This Geobacillus stearothermophilus (Bacillus stearothermophilus) protein is Thermostable neutral protease NprT (nprT).